The following is a 251-amino-acid chain: MLAKRIIPCLDVREGRVVKGINFEDLRDAGSILEQARFYNNELADELVFLDISASLESRKTTLEEVLKVSEEVFIPLTVGGGISSVERARDAFLHGADKVSVNTAAVYDPKLITRIADQYGSQAVVVAIDVKKVGEKYIVHTHSGKELTKYEALEWARMVQELGAGEILLTSMDRDGTKAGYDNEILREISTSVHIPVIASGGAGNLEHLYDGFAKGCADAALAASIFHFRQYTIREAKEYLRERGIEVRL.

Active-site residues include Asp-11 and Asp-130.

It belongs to the HisA/HisF family. In terms of assembly, heterodimer of HisH and HisF.

Its subcellular location is the cytoplasm. It catalyses the reaction 5-[(5-phospho-1-deoxy-D-ribulos-1-ylimino)methylamino]-1-(5-phospho-beta-D-ribosyl)imidazole-4-carboxamide + L-glutamine = D-erythro-1-(imidazol-4-yl)glycerol 3-phosphate + 5-amino-1-(5-phospho-beta-D-ribosyl)imidazole-4-carboxamide + L-glutamate + H(+). It participates in amino-acid biosynthesis; L-histidine biosynthesis; L-histidine from 5-phospho-alpha-D-ribose 1-diphosphate: step 5/9. In terms of biological role, IGPS catalyzes the conversion of PRFAR and glutamine to IGP, AICAR and glutamate. The HisF subunit catalyzes the cyclization activity that produces IGP and AICAR from PRFAR using the ammonia provided by the HisH subunit. The polypeptide is Imidazole glycerol phosphate synthase subunit HisF (Chlorobium phaeobacteroides (strain BS1)).